Here is a 75-residue protein sequence, read N- to C-terminus: Putative snRNP Sm-like protein (75 aa).

In terms of domain architecture, Sm spans 4–75 (RPLDVIHRSL…NVLAISPTEE (72 aa)).

This sequence belongs to the snRNP Sm proteins family.

In Pyrococcus horikoshii (strain ATCC 700860 / DSM 12428 / JCM 9974 / NBRC 100139 / OT-3), this protein is Putative snRNP Sm-like protein.